The following is a 412-amino-acid chain: Peptidase T (412 aa).

Zn(2+) is bound at residue histidine 81. The active site involves aspartate 83. Aspartate 144 contacts Zn(2+). Residue glutamate 178 is the Proton acceptor of the active site. Zn(2+) contacts are provided by glutamate 179, aspartate 201, and histidine 383.

Belongs to the peptidase M20B family. Zn(2+) is required as a cofactor.

The protein localises to the cytoplasm. The enzyme catalyses Release of the N-terminal residue from a tripeptide.. Functionally, cleaves the N-terminal amino acid of tripeptides. The polypeptide is Peptidase T (Bacillus cereus (strain ATCC 14579 / DSM 31 / CCUG 7414 / JCM 2152 / NBRC 15305 / NCIMB 9373 / NCTC 2599 / NRRL B-3711)).